The chain runs to 100 residues: Integration host factor subunit beta (100 aa).

It belongs to the bacterial histone-like protein family. In terms of assembly, heterodimer of an alpha and a beta chain.

Its function is as follows. This protein is one of the two subunits of integration host factor, a specific DNA-binding protein that functions in genetic recombination as well as in transcriptional and translational control. This Agrobacterium fabrum (strain C58 / ATCC 33970) (Agrobacterium tumefaciens (strain C58)) protein is Integration host factor subunit beta.